Here is a 147-residue protein sequence, read N- to C-terminus: Angiogenin (147 aa).

The N-terminal stretch at 1 to 24 (MVILLGPLLLVFMLGLGLAPLSLA) is a signal peptide. His-37 acts as the Proton acceptor in catalysis. TRNA-binding residues include Arg-45 and Asp-46. 3 cysteine pairs are disulfide-bonded: Cys-50/Cys-104, Cys-63/Cys-115, and Cys-81/Cys-130. The short motif at 55–59 (KQRGL) is the Nucleolar localization signal element. TRNA is bound by residues Cys-104 and Ile-126. His-137 functions as the Proton donor in the catalytic mechanism.

Belongs to the pancreatic ribonuclease family. As to quaternary structure, homodimer. Interacts with RNH1; inhibiting ANG ribonuclease activity. Interacts with PCNA.

Its subcellular location is the secreted. It is found in the nucleus. It localises to the nucleolus. The protein localises to the cytoplasm. The protein resides in the stress granule. With respect to regulation, has weak tRNA ribonuclease activity by itself due to partial autoinhibition by its C-terminus, which folds into a short alpha-helix that partially occludes the substrate-binding site. In absence of stress, the ribonuclease activity is inhibited by RNH1 in the cytoplasm. In response to stress, dissociates from RNH1 in the cytoplasm and associates with cytoplasmic ribosomes with vacant A-sites: ribosomes directly activate the tRNA ribonuclease activity of ANG by refolding the C-terminal alpha-helix. In response to stress, the angiogenic activity of ANG is inhibited by RNH1 in the nucleus. Functionally, secreted ribonuclease that can either promote or restrict cell proliferation of target cells, depending on the context. Endocytosed in target cells via its receptor PLXNB2 and translocates to the cytoplasm or nucleus. Under stress conditions, localizes to the cytoplasm and promotes the assembly of stress granules (SGs): specifically cleaves a subset of tRNAs within anticodon loops to produce tRNA-derived stress-induced fragments (tiRNAs), resulting in translation repression and inhibition of cell proliferation. tiRNas also prevent formation of apoptosome, thereby promoting cell survival. Preferentially cleaves RNAs between a pyrimidine and an adenosine residue, suggesting that it cleaves the anticodon loop of tRNA(Ala) (32-UUAGCAU-38) after positions 33 and 36. Cleaves a subset of tRNAs, including tRNA(Ala), tRNA(Glu), tRNA(Gly), tRNA(Lys), tRNA(Val), tRNA(His), tRNA(Asp) and tRNA(Sec). Under growth conditions and in differentiated cells, translocates to the nucleus and stimulates ribosomal RNA (rRNA) transcription, including that containing the initiation site sequences of 45S rRNA, thereby promoting cell growth and proliferation. Angiogenin induces vascularization of normal and malignant tissues via its ability to promote rRNA transcription. Involved in hematopoietic stem and progenitor cell (HSPC) growth and survival by promoting rRNA transcription in growth conditions and inhibiting translation in response to stress, respectively. Mediates the crosstalk between myeloid and intestinal epithelial cells to protect the intestinal epithelial barrier integrity: secreted by myeloid cells and promotes intestinal epithelial cells proliferation and survival. Also mediates osteoclast-endothelial cell crosstalk in growing bone: produced by osteoclasts and protects the neighboring vascular cells against senescence by promoting rRNA transcription. This Sus scrofa (Pig) protein is Angiogenin (ANG).